The primary structure comprises 151 residues: 3-hydroxyacyl-[acyl-carrier-protein] dehydratase FabZ (151 aa).

His54 is an active-site residue.

This sequence belongs to the thioester dehydratase family. FabZ subfamily. As to quaternary structure, oligomer. The N-terminus is blocked.

The protein resides in the cytoplasm. It carries out the reaction a (3R)-hydroxyacyl-[ACP] = a (2E)-enoyl-[ACP] + H2O. Functionally, involved in unsaturated fatty acids biosynthesis. Catalyzes the dehydration of short chain beta-hydroxyacyl-ACPs and long chain saturated and unsaturated beta-hydroxyacyl-ACPs. The polypeptide is 3-hydroxyacyl-[acyl-carrier-protein] dehydratase FabZ (Escherichia coli O9:H4 (strain HS)).